Reading from the N-terminus, the 238-residue chain is tRNA (guanine-N(1)-)-methyltransferase (238 aa).

Residues Gly110 and 129–134 (LGDFIL) contribute to the S-adenosyl-L-methionine site.

Belongs to the RNA methyltransferase TrmD family. In terms of assembly, homodimer.

The protein resides in the cytoplasm. It catalyses the reaction guanosine(37) in tRNA + S-adenosyl-L-methionine = N(1)-methylguanosine(37) in tRNA + S-adenosyl-L-homocysteine + H(+). In terms of biological role, specifically methylates guanosine-37 in various tRNAs. In Clostridium botulinum (strain Eklund 17B / Type B), this protein is tRNA (guanine-N(1)-)-methyltransferase.